A 387-amino-acid chain; its full sequence is Probable serine protease FE772_23060 (387 aa).

The protein belongs to the peptidase S1 family.

Functionally, possibly a dedicated protease for substrate gasdermin bGSDM; cleaves the bGSDM precursor, releasing the pore-forming moiety, which integrates into the membrane and triggers cell death. Involved in defense against bacteriophages. When this probable 4 gene operon (bGSDM-FE772_23060-FE772_23065-FE772_23070) is inserted into E.coli it provides nearly 100-fold protection against phages T5 and T6 and about 8-fold against phage T4. The operon without bGSDM no longer protects against phage. The polypeptide is Probable serine protease FE772_23060 (Lysobacter enzymogenes).